A 257-amino-acid polypeptide reads, in one-letter code: 4-diphosphocytidyl-2-C-methyl-D-erythritol kinase (257 aa).

Residue Lys8 is part of the active site. 91 to 101 (PMGGGLGGGSA) lines the ATP pocket. The active site involves Asp131.

It belongs to the GHMP kinase family. IspE subfamily.

The catalysed reaction is 4-CDP-2-C-methyl-D-erythritol + ATP = 4-CDP-2-C-methyl-D-erythritol 2-phosphate + ADP + H(+). It participates in isoprenoid biosynthesis; isopentenyl diphosphate biosynthesis via DXP pathway; isopentenyl diphosphate from 1-deoxy-D-xylulose 5-phosphate: step 3/6. Functionally, catalyzes the phosphorylation of the position 2 hydroxy group of 4-diphosphocytidyl-2C-methyl-D-erythritol. The chain is 4-diphosphocytidyl-2-C-methyl-D-erythritol kinase from Petrotoga mobilis (strain DSM 10674 / SJ95).